We begin with the raw amino-acid sequence, 671 residues long: Sodium, potassium, lithium and rubidium/H(+) antiporter (671 aa).

A run of 11 helical transmembrane segments spans residues 7–29 (VLVL…FIPV), 46–66 (GLHI…PLLF), 83–103 (PILL…GYTI), 110–130 (IPLP…VVAV), 156–176 (ASGL…AFSI), 182–202 (SFVL…FFII), 228–248 (FVIY…VVAG), 276–296 (IILF…IPDV), 315–335 (ILII…LFWA), 364–384 (GAVT…GSPF), and 389–409 (LIIF…SVLL).

This sequence belongs to the monovalent cation:proton antiporter 1 (CPA1) transporter (TC 2.A.36) family. Nhak (TC 2.A.36.3.2) subfamily.

Its subcellular location is the cell membrane. In terms of biological role, transporter involved in the efflux of sodium, potassium, lithium and rubidium. The sequence is that of Sodium, potassium, lithium and rubidium/H(+) antiporter (nhaK) from Bacillus pumilus (strain SAFR-032).